The chain runs to 565 residues: Formate--tetrahydrofolate ligase (565 aa).

Position 73–80 (73–80 (TPAGEGKS)) interacts with ATP.

The protein belongs to the formate--tetrahydrofolate ligase family.

The enzyme catalyses (6S)-5,6,7,8-tetrahydrofolate + formate + ATP = (6R)-10-formyltetrahydrofolate + ADP + phosphate. Its pathway is one-carbon metabolism; tetrahydrofolate interconversion. The polypeptide is Formate--tetrahydrofolate ligase (Arthrobacter sp. (strain FB24)).